Reading from the N-terminus, the 42-residue chain is Photosystem II reaction center protein J (42 aa).

The chain crosses the membrane as a helical span at residues 10–30 (IPLWLVGTVAGTAALTLVAVF).

The protein belongs to the PsbJ family. In terms of assembly, PSII is composed of 1 copy each of membrane proteins PsbA, PsbB, PsbC, PsbD, PsbE, PsbF, PsbH, PsbI, PsbJ, PsbK, PsbL, PsbM, PsbT, PsbX, PsbY, PsbZ, Psb30/Ycf12, at least 3 peripheral proteins of the oxygen-evolving complex and a large number of cofactors. It forms dimeric complexes.

It is found in the plastid. The protein resides in the chloroplast thylakoid membrane. In terms of biological role, one of the components of the core complex of photosystem II (PSII). PSII is a light-driven water:plastoquinone oxidoreductase that uses light energy to abstract electrons from H(2)O, generating O(2) and a proton gradient subsequently used for ATP formation. It consists of a core antenna complex that captures photons, and an electron transfer chain that converts photonic excitation into a charge separation. This Chlorella vulgaris (Green alga) protein is Photosystem II reaction center protein J.